Consider the following 750-residue polypeptide: Ribosomal RNA large subunit methyltransferase K/L (750 aa).

The region spanning 46–157 is the THUMP domain; the sequence is TAYRLCLWSR…RGEAILSLDL (112 aa).

Belongs to the methyltransferase superfamily. RlmKL family.

It localises to the cytoplasm. The enzyme catalyses guanosine(2445) in 23S rRNA + S-adenosyl-L-methionine = N(2)-methylguanosine(2445) in 23S rRNA + S-adenosyl-L-homocysteine + H(+). It carries out the reaction guanosine(2069) in 23S rRNA + S-adenosyl-L-methionine = N(2)-methylguanosine(2069) in 23S rRNA + S-adenosyl-L-homocysteine + H(+). In terms of biological role, specifically methylates the guanine in position 2445 (m2G2445) and the guanine in position 2069 (m7G2069) of 23S rRNA. This chain is Ribosomal RNA large subunit methyltransferase K/L, found in Pseudomonas syringae pv. syringae (strain B728a).